A 283-amino-acid polypeptide reads, in one-letter code: V-set domain containing T-cell activation inhibitor 1 (283 aa).

An N-terminal signal peptide occupies residues 1-24 (MASLGQIIFWSIINIIIILAGAIA). 2 consecutive Ig-like V-type domains span residues 35–144 (HFIT…ANLE) and 153–241 (PEIN…IKVT). 2 disulfide bridges follow: Cys56–Cys130 and Cys168–Cys225. Residue Asn216 is glycosylated (N-linked (GlcNAc...) asparagine). The GPI-anchor amidated glycine moiety is linked to residue Gly257. Positions 258-283 (PSPCVFSSAFVAGWALLSLSCCLMLR) are cleaved as a propeptide — removed in mature form.

This sequence belongs to the immunoglobulin superfamily. BTN/MOG family. N-glycosylated. In terms of tissue distribution, expressed on the surface of professional antigen-presenting cells (at protein level). Widely expressed, including in kidney, liver, lung, pancreas, placenta, prostate, spleen, testis and thymus.

Its subcellular location is the cell membrane. Functionally, negatively regulates T-cell-mediated immune response by inhibiting T-cell activation, proliferation, cytokine production and development of cytotoxicity. When expressed on the cell surface of tumor macrophages, plays an important role, together with regulatory T-cells (Treg), in the suppression of tumor-associated antigen-specific T-cell immunity. Involved in promoting epithelial cell transformation. In Mus musculus (Mouse), this protein is V-set domain containing T-cell activation inhibitor 1.